A 368-amino-acid chain; its full sequence is C2H2 type master regulator of conidiophore development BrlA (368 aa).

The segment at 268–292 (CKCDYPGCHKAFRRNEHLKRHKQTF) adopts a C2H2-type 1; degenerate zinc-finger fold. The segment at 300–323 (FSCEFCGKDQFNRQDNLNNHRKLH) adopts a C2H2-type 2 zinc-finger fold. The tract at residues 338–368 (AAVPIIEQEERSRKRRAPPKSKSADKRVDDY) is disordered. The segment covering 359–368 (KSADKRVDDY) has biased composition (basic and acidic residues).

The protein resides in the nucleus. Its function is as follows. BrlA, abaA and wetA are pivotal regulators of conidiophore development and conidium maturation. They act individually and together to regulate their own expression and that of numerous other sporulation-specific genes. BrlA, abaA and wetA act together to positively regulate the expression of the Pks1 gene cluster that mediates the biosynthesis of an anthraquinone derivative pigment that contributes to conidial pigmentation that provides protection from UV radiation, heat and cold stress. This Metarhizium robertsii (strain ARSEF 23 / ATCC MYA-3075) (Metarhizium anisopliae (strain ARSEF 23)) protein is C2H2 type master regulator of conidiophore development BrlA.